We begin with the raw amino-acid sequence, 139 residues long: Mitochondrial intermembrane space import and assembly protein 40-A (139 aa).

Intrachain disulfides connect Cys-53/Cys-55, Cys-64/Cys-97, and Cys-74/Cys-87. The CHCH domain occupies 61–105; that stretch reads SGPCGEQFKSAFSCFHYSQEEIKGSDCLDQFRGMQECMQKYPDLY. Short sequence motifs (cx9C motif) lie at residues 64–74 and 87–97; these read CGEQFKSAFSC and CLDQFRGMQEC. The interval 103–139 is disordered; it reads DLYPQEDDEEEAEKEKQNKEAEPSVTQSSDTKEESSS. The segment covering 115-124 has biased composition (basic and acidic residues); the sequence is EKEKQNKEAE.

Monomer. Can form homooligomers.

The protein resides in the mitochondrion intermembrane space. In terms of biological role, central component of a redox-sensitive mitochondrial intermembrane space import machinery which is required for the biogenesis of respiratory chain complexes. Functions as chaperone and catalyzes the formation of disulfide bonds in substrate proteins, such as COX17 or MICU1. Required for the import and folding of small cysteine-containing proteins (small Tim) in the mitochondrial intermembrane space (IMS). Precursor proteins to be imported into the IMS are translocated in their reduced form into the mitochondria. This chain is Mitochondrial intermembrane space import and assembly protein 40-A (chchd4-a), found in Xenopus laevis (African clawed frog).